A 320-amino-acid polypeptide reads, in one-letter code: SUN domain-containing protein 3 (320 aa).

Residues 1 to 6 (MLTRSW) lie on the Nuclear side of the membrane. Residues 7 to 29 (KIILSTVFISTFLLVGLLNHQWL) traverse the membrane as a helical segment. Residues 30-320 (KETEFPQKPR…RVHGIPSDYT (291 aa)) are Perinuclear space-facing. Residues 63–102 (KEQQELLKKESQTLENNFREILFLIEQIDVLKALLKDMKD) are a coiled coil. One can recognise an SUN domain in the interval 156-317 (GASVIEAGTS…YRFRVHGIPS (162 aa)).

Self-associates. Interacts with SYNE1 and SPAG4/SUN4. Proposed to form a spermatogenesis-specific LINC complex with SYNE1 during sperm head formation possibly implicating a SUN domain-based heterotrimer with SPAG4/SUN4 associating with SYNE1. Can interact with SYNE3; the interaction is questioned by missing colocalization in spermatids. As to expression, specifically expressed in testis (at protein level).

Its subcellular location is the membrane. It localises to the nucleus envelope. The protein localises to the nucleus inner membrane. Functionally, as a probable component of the LINC (LInker of Nucleoskeleton and Cytoskeleton) complex, involved in the connection between the nuclear lamina and the cytoskeleton. The nucleocytoplasmic interactions established by the LINC complex play an important role in the transmission of mechanical forces across the nuclear envelope and in nuclear movement and positioning. May be involved in nuclear remodeling during sperm head formation in spermatogenesis. A probable SUN3:SYNE1 LINC complex may tether spermatid nuclei to posterior cytoskeletal structures such as the manchette. This is SUN domain-containing protein 3 (Sun3) from Mus musculus (Mouse).